Reading from the N-terminus, the 246-residue chain is Phosphonates import ATP-binding protein PhnC (246 aa).

Residues 2 to 246 (IKFENVSKVY…ILDEVYRKEG (245 aa)) enclose the ABC transporter domain. ATP is bound at residue 35–42 (GTSGAGKS).

This sequence belongs to the ABC transporter superfamily. Phosphonates importer (TC 3.A.1.9.1) family. As to quaternary structure, the complex is composed of two ATP-binding proteins (PhnC), two transmembrane proteins (PhnE) and a solute-binding protein (PhnD).

It localises to the cell membrane. The enzyme catalyses phosphonate(out) + ATP + H2O = phosphonate(in) + ADP + phosphate + H(+). Functionally, part of the ABC transporter complex PhnCDE involved in phosphonates import. Responsible for energy coupling to the transport system. This is Phosphonates import ATP-binding protein PhnC from Lactococcus lactis subsp. cremoris (strain SK11).